The chain runs to 223 residues: Sigma non-opioid intracellular receptor 1 (223 aa).

Over 1 to 9 (MQWAVGRRW) the chain is Lumenal. The segment at 2–8 (QWAVGRR) is targeting to endoplasmic reticulum-associated lipid droplets. A helical transmembrane segment spans residues 10-30 (AWAALLLAVAAVLTQVVWLWL). Over 31-223 (GTQSFVFQRE…LTTYLFGQDP (193 aa)) the chain is Cytoplasmic. Residues 99–106 (SLSEYVLL) are important for ligand-binding. Residues 177-223 (VIPSTLAFALADTVFSTQDFLTLFYTLRSYARGLRLELTTYLFGQDP) form a C-terminal hydrophobic region region.

It belongs to the ERG2 family. Homotrimer. Forms a ternary complex with ANK2 and ITPR3. The complex is disrupted by agonists. Interacts with KCNA4. Interacts with KCNA2; cocaine consumption leads to increased interaction. Interacts with RNF112 in an oxidative stress-regulated manner. Widely expressed with higher expression in liver, colon, prostate, placenta, small intestine, heart and pancreas. Expressed in the retina by retinal pigment epithelial cells. Expressed in alpha-motor neurons.

The protein resides in the nucleus inner membrane. The protein localises to the nucleus outer membrane. Its subcellular location is the nucleus envelope. It is found in the cytoplasmic vesicle. It localises to the endoplasmic reticulum membrane. The protein resides in the membrane. The protein localises to the lipid droplet. Its subcellular location is the cell junction. It is found in the cell membrane. It localises to the cell projection. The protein resides in the growth cone. The protein localises to the postsynaptic density membrane. Its function is as follows. Functions in lipid transport from the endoplasmic reticulum and is involved in a wide array of cellular functions probably through regulation of the biogenesis of lipid microdomains at the plasma membrane. Involved in the regulation of different receptors it plays a role in BDNF signaling and EGF signaling. Also regulates ion channels like the potassium channel and could modulate neurotransmitter release. Plays a role in calcium signaling through modulation together with ANK2 of the ITP3R-dependent calcium efflux at the endoplasmic reticulum. Plays a role in several other cell functions including proliferation, survival and death. Originally identified for its ability to bind various psychoactive drugs it is involved in learning processes, memory and mood alteration. Necessary for proper mitochondrial axonal transport in motor neurons, in particular the retrograde movement of mitochondria. Plays a role in protecting cells against oxidative stress-induced cell death via its interaction with RNF112. The protein is Sigma non-opioid intracellular receptor 1 (SIGMAR1) of Homo sapiens (Human).